A 270-amino-acid chain; its full sequence is Sulfur carrier protein FdhD (270 aa).

Cysteine 116 acts as the Cysteine persulfide intermediate in catalysis. 253-258 contacts Mo-bis(molybdopterin guanine dinucleotide); the sequence is FAREGK.

Belongs to the FdhD family.

The protein resides in the cytoplasm. Required for formate dehydrogenase (FDH) activity. Acts as a sulfur carrier protein that transfers sulfur from IscS to the molybdenum cofactor prior to its insertion into FDH. The sequence is that of Sulfur carrier protein FdhD from Haemophilus influenzae (strain 86-028NP).